A 563-amino-acid chain; its full sequence is Arginine--tRNA ligase (563 aa).

A 'HIGH' region motif is present at residues 121 to 131 (PNIAKPFSIGH).

This sequence belongs to the class-I aminoacyl-tRNA synthetase family. As to quaternary structure, monomer.

Its subcellular location is the cytoplasm. It carries out the reaction tRNA(Arg) + L-arginine + ATP = L-arginyl-tRNA(Arg) + AMP + diphosphate. This is Arginine--tRNA ligase from Streptococcus equi subsp. equi (strain 4047).